The sequence spans 373 residues: Muscleblind-like protein 2 (373 aa).

4 C3H1-type zinc fingers span residues 13-41 (WLTL…HPPK), 47-73 (NGRV…HPPT), 176-204 (TDKL…HPAD), and 212-238 (DNTV…HPPA).

Belongs to the muscleblind family. Interacts with ITGA3.

The protein localises to the nucleus. Its subcellular location is the cytoplasm. Its function is as follows. Mediates pre-mRNA alternative splicing regulation. Acts either as activator or repressor of splicing on specific pre-mRNA targets. Inhibits cardiac troponin-T (TNNT2) pre-mRNA exon inclusion but induces insulin receptor (IR) pre-mRNA exon inclusion in muscle. Antagonizes the alternative splicing activity pattern of CELF proteins. RNA-binding protein that binds to 5'ACACCC-3' core sequence, termed zipcode, within the 3'UTR of ITGA3. Binds to CUG triplet repeat expansion in myotonic dystrophy muscle cells by sequestering the target RNAs. Together with RNA binding proteins RBPMS and RBFOX2, activates vascular smooth muscle cells alternative splicing events. Regulates NCOR2 alternative splicing. Seems to regulate expression and localization of ITGA3 by transporting it from the nucleus to cytoplasm at adhesion plaques. May play a role in myotonic dystrophy pathophysiology (DM). The polypeptide is Muscleblind-like protein 2 (Mbnl2) (Mus musculus (Mouse)).